The chain runs to 327 residues: 2-keto-3-deoxygluconate permease (327 aa).

10 helical membrane-spanning segments follow: residues 10 to 30, 42 to 62, 73 to 93, 95 to 115, 139 to 159, 163 to 183, 199 to 219, 224 to 244, 254 to 274, and 289 to 309; these read IPGGMMLVPLFLGALCHTFSP, GMITGTVPILAVWFFCMGASI, KSGTLVVTKIAVAWVVAAIAS, IIPEHGVEVGFFAGLSTLALV, AGAFVLMSLESGPLMTMIILG, IASFEPHVFVGAVLPFLVGFA, VQTLIPFFAFALGNTIDLTVI, LLGILLGVAVIIVTGIPLIIA, TAGIAASSSAGAAVATPVLIA, and SLVATAVIVTSILVPIITSIW.

The protein belongs to the KdgT transporter family.

It localises to the cell inner membrane. It carries out the reaction 2-dehydro-3-deoxy-D-gluconate(in) + H(+)(in) = 2-dehydro-3-deoxy-D-gluconate(out) + H(+)(out). Functionally, catalyzes the proton-dependent uptake of 2-keto-3-deoxygluconate (KDG) into the cell. In Escherichia coli O139:H28 (strain E24377A / ETEC), this protein is 2-keto-3-deoxygluconate permease.